The following is a 900-amino-acid chain: MTEMMTPAMRQYYEAKQAYPDTLIFFRMGDFYESFGEDAKTIAKELEITLTARGKDRSGERMPLAGIPYHAIDTYLPRLINKGYKVAICEQLEDPKQAKGVVKRGVVRVVTPGTAIDSSMFPDASNNYLMAVAGKEVGKTGKSGEKEMEFGLSFLDISTGEFLTTQFTDSGSFDKLLSELARMKPAECILPPTLYGNSVLVDRLREQTIVQEFAPEISGIEEAGEKLKIHFRVSTLEGMGCEKLEFGVYSAWSALEYAKTTQMRDLAHINTLRTYSNTEFMVLDSVTLRNLEIVKNVRDEGDHNSLYRTLSFTKTPMGSRILKKWLLKPLLSVEQINHRLDAVEELAGNPLLRYDIRDWLSEVRDIERLVGRIVYGNANARDLVALKKSLDAVPSIRDCLLEKAGAEMLKGIAEGLASFSEIEELAKMIGNAIVEEPPVSVREGGMIKSGFSEELDELRDISSNSKQWIAAFQQKEKDRTGIKSLKIGYNKVFGYYIEVTNANSSQVPDDYIRKQTMANAERFFTPELKEKESLILTANDKAVALEYEIFTEITETLSAHSKELQETAERIGVLDVLADLAEVAENNNYTRPQLTEDCKILIRDGRHPVVESTVSGGFVPNDTEMDCKENQFLLVTGPNMAGKSTYMRQTALIAIMAQAGSFVPASYASIGVIDQVFTRIGAFDDLASGQSTFMVEMVELANILNNASPKSLVLLDEIGRGTSTYDGYSIAKAVVEFLHNRGKVGIRALFATHYHQLTSLEEKLKRVKNYHIAVKEEGHELVFLRKIVPGATDRSYGIHVARLAGVPEKVIERANEILRELERESVLEESEDCENGKKRKGKATTRYTQMLLFDPGSRSGNSEVKRGLSPVEAALKKMNVDEMTPIEAMNKLHELKKLLG.

Position 637 to 644 (637 to 644 (GPNMAGKS)) interacts with ATP.

This sequence belongs to the DNA mismatch repair MutS family.

Functionally, this protein is involved in the repair of mismatches in DNA. It is possible that it carries out the mismatch recognition step. This protein has a weak ATPase activity. This is DNA mismatch repair protein MutS from Methanosarcina mazei (strain ATCC BAA-159 / DSM 3647 / Goe1 / Go1 / JCM 11833 / OCM 88) (Methanosarcina frisia).